Consider the following 149-residue polypeptide: 2S seed storage albumin protein (149 aa).

Positions 1–22 (MKLFIILATATLLIAATQATYP) are cleaved as a signal peptide. Disulfide bonds link Cys38–Cys98, Cys52–Cys87, Cys88–Cys133, and Cys100–Cys140. An igE-binding region spans residues 121-128 (EGVRDLKE).

Belongs to the 2S seed storage albumins family. In terms of tissue distribution, expressed in seeds (at protein level).

Functionally, seed storage protein. The chain is 2S seed storage albumin protein from Fagopyrum esculentum (Common buckwheat).